A 235-amino-acid polypeptide reads, in one-letter code: Octanoyltransferase (235 aa).

The BPL/LPL catalytic domain occupies 28-203; it reads GRAEETLLLL…PFAGLPADAL (176 aa). Residues 66-73, 133-135, and 146-148 contribute to the substrate site; these read RGGDVTWH, SIG, and GFA. Cys-164 acts as the Acyl-thioester intermediate in catalysis. The disordered stretch occupies residues 202–235; that stretch reads ALPEQPRDAVQPSSCDDVHAPSTTSRRPPCPLTV.

It belongs to the LipB family.

The protein resides in the cytoplasm. It catalyses the reaction octanoyl-[ACP] + L-lysyl-[protein] = N(6)-octanoyl-L-lysyl-[protein] + holo-[ACP] + H(+). It participates in protein modification; protein lipoylation via endogenous pathway; protein N(6)-(lipoyl)lysine from octanoyl-[acyl-carrier-protein]: step 1/2. Catalyzes the transfer of endogenously produced octanoic acid from octanoyl-acyl-carrier-protein onto the lipoyl domains of lipoate-dependent enzymes. Lipoyl-ACP can also act as a substrate although octanoyl-ACP is likely to be the physiological substrate. The polypeptide is Octanoyltransferase (Geobacter sulfurreducens (strain ATCC 51573 / DSM 12127 / PCA)).